We begin with the raw amino-acid sequence, 626 residues long: (+)-3-carene synthase 1, chloroplastic (626 aa).

The N-terminal 45 residues, 1–45, are a transit peptide targeting the chloroplast; the sequence is MSLISAVPLASSCVSKSLISSVREHKALRRAIATLQMSRPGKSVA. Mg(2+) is bound by residues D377, D381, and D529. The DDXXD motif signature appears at 377-381; sequence DDMYD.

This sequence belongs to the terpene synthase family. Tpsd subfamily. Requires Mg(2+) as cofactor. Mn(2+) serves as cofactor.

The protein localises to the plastid. Its subcellular location is the chloroplast. It catalyses the reaction (2E)-geranyl diphosphate = (+)-car-3-ene + diphosphate. The enzyme catalyses (2E)-geranyl diphosphate = terpinolene + diphosphate. Its pathway is terpene metabolism; oleoresin biosynthesis. It participates in secondary metabolite biosynthesis; terpenoid biosynthesis. Its function is as follows. Monoterpene synthase (TPS) involved in the biosynthesis of monoterpene natural products included in conifer oleoresin secretions and volatile emissions; these compounds contribute to biotic and abiotic stress defense against herbivores and pathogens. Catalyzes the conversion of (2E)-geranyl diphosphate (GPP) to (+)-3-carene and, to a lower extent, to terpinolene. The sequence is that of (+)-3-carene synthase 1, chloroplastic from Pinus banksiana (Jack pine).